The following is a 334-amino-acid chain: Protein-methionine-sulfoxide reductase catalytic subunit MsrP (334 aa).

Positions 1-44 (MKAVNPLTENDVTPESLFNARRRTVLKMLGMSAAALSLPGAARA) form a signal peptide, tat-type signal. Mo-molybdopterin-binding positions include Asn-88, 91–92 (YE), Cys-146, Thr-181, Asn-233, Arg-238, and 249–251 (GIK).

It belongs to the MsrP family. In terms of assembly, heterodimer of a catalytic subunit (MsrP) and a heme-binding subunit (MsrQ). Requires Mo-molybdopterin as cofactor. Predicted to be exported by the Tat system. The position of the signal peptide cleavage has not been experimentally proven.

Its subcellular location is the periplasm. It catalyses the reaction L-methionyl-[protein] + a quinone + H2O = L-methionyl-(S)-S-oxide-[protein] + a quinol. The catalysed reaction is L-methionyl-[protein] + a quinone + H2O = L-methionyl-(R)-S-oxide-[protein] + a quinol. Functionally, part of the MsrPQ system that repairs oxidized periplasmic proteins containing methionine sulfoxide residues (Met-O), using respiratory chain electrons. Thus protects these proteins from oxidative-stress damage caused by reactive species of oxygen and chlorine generated by the host defense mechanisms. MsrPQ is essential for the maintenance of envelope integrity under bleach stress, rescuing a wide series of structurally unrelated periplasmic proteins from methionine oxidation. The catalytic subunit MsrP is non-stereospecific, being able to reduce both (R-) and (S-) diastereoisomers of methionine sulfoxide. The protein is Protein-methionine-sulfoxide reductase catalytic subunit MsrP of Erwinia tasmaniensis (strain DSM 17950 / CFBP 7177 / CIP 109463 / NCPPB 4357 / Et1/99).